A 467-amino-acid chain; its full sequence is Glutamyl-tRNA reductase (467 aa).

Residues 49 to 52 (TCNR), serine 109, 114 to 116 (EQQ), and glutamine 120 contribute to the substrate site. The Nucleophile role is filled by cysteine 50. Position 189–194 (189–194 (GAGAMG)) interacts with NADP(+). The tract at residues 446–467 (GFSDTTRYGTSPAQSSSKYHAE) is disordered. Polar residues predominate over residues 447–467 (FSDTTRYGTSPAQSSSKYHAE).

It belongs to the glutamyl-tRNA reductase family. As to quaternary structure, homodimer.

The catalysed reaction is (S)-4-amino-5-oxopentanoate + tRNA(Glu) + NADP(+) = L-glutamyl-tRNA(Glu) + NADPH + H(+). It participates in porphyrin-containing compound metabolism; protoporphyrin-IX biosynthesis; 5-aminolevulinate from L-glutamyl-tRNA(Glu): step 1/2. Functionally, catalyzes the NADPH-dependent reduction of glutamyl-tRNA(Glu) to glutamate 1-semialdehyde (GSA). This is Glutamyl-tRNA reductase from Mycobacterium leprae (strain TN).